The following is an 83-amino-acid chain: Exodeoxyribonuclease 7 small subunit (83 aa).

This sequence belongs to the XseB family. Heterooligomer composed of large and small subunits.

Its subcellular location is the cytoplasm. The catalysed reaction is Exonucleolytic cleavage in either 5'- to 3'- or 3'- to 5'-direction to yield nucleoside 5'-phosphates.. Bidirectionally degrades single-stranded DNA into large acid-insoluble oligonucleotides, which are then degraded further into small acid-soluble oligonucleotides. The polypeptide is Exodeoxyribonuclease 7 small subunit (Afipia carboxidovorans (strain ATCC 49405 / DSM 1227 / KCTC 32145 / OM5) (Oligotropha carboxidovorans)).